A 169-amino-acid polypeptide reads, in one-letter code: Aspartic protease inhibitor 3 (169 aa).

Residue Asn-1 is glycosylated (N-linked (GlcNAc...) asparagine). 2 disulfides stabilise this stretch: Cys-30-Cys-75 and Cys-124-Cys-134.

It belongs to the protease inhibitor I3 (leguminous Kunitz-type inhibitor) family.

It is found in the vacuole. Its function is as follows. Inhibitor of cathepsin D (aspartic protease). May also inhibit trypsin and chymotrypsin (serine proteases). Protects the plant by inhibiting proteases of invading organisms. The sequence is that of Aspartic protease inhibitor 3 from Solanum tuberosum (Potato).